The sequence spans 543 residues: Hydroxylamine reductase (543 aa).

Residues C5, C8, C17, and C23 each contribute to the [4Fe-4S] cluster site. Hybrid [4Fe-2O-2S] cluster-binding residues include H236, E260, C304, C398, C426, C451, E486, and K488. Position 398 is a cysteine persulfide (C398).

The protein belongs to the HCP family. [4Fe-4S] cluster serves as cofactor. It depends on hybrid [4Fe-2O-2S] cluster as a cofactor.

It localises to the cytoplasm. It carries out the reaction A + NH4(+) + H2O = hydroxylamine + AH2 + H(+). In terms of biological role, catalyzes the reduction of hydroxylamine to form NH(3) and H(2)O. The sequence is that of Hydroxylamine reductase from Bacteroides thetaiotaomicron (strain ATCC 29148 / DSM 2079 / JCM 5827 / CCUG 10774 / NCTC 10582 / VPI-5482 / E50).